We begin with the raw amino-acid sequence, 250 residues long: UPF0524 protein C3orf70 homolog (250 aa).

The segment at 201–250 is disordered; sequence ESCDEDTEEGAELSSEEDYSPESSWEPDECTLLSPSQSDLEVIETIETTV. Positions 202 to 229 are enriched in acidic residues; sequence SCDEDTEEGAELSSEEDYSPESSWEPDE.

The protein belongs to the UPF0524 family.

Functionally, may play a role in neuronal and neurobehavioral development. The protein is UPF0524 protein C3orf70 homolog of Bos taurus (Bovine).